The following is a 738-amino-acid chain: Polyribonucleotide nucleotidyltransferase (738 aa).

Positions 528 and 534 each coordinate Mg(2+). In terms of domain architecture, KH spans 594 to 653; that stretch reads PRVVRVKIPVQKIGELIGPKGKVINSIQDETGAEISIEDDGTVYIGSSQADSSEKAVAMV. Residues 665-737 enclose the S1 motif domain; the sequence is GSQFLGTVVK…DRGKLCLVAV (73 aa).

The protein belongs to the polyribonucleotide nucleotidyltransferase family. Mg(2+) is required as a cofactor.

The protein localises to the cytoplasm. The enzyme catalyses RNA(n+1) + phosphate = RNA(n) + a ribonucleoside 5'-diphosphate. Its function is as follows. Involved in mRNA degradation. Catalyzes the phosphorolysis of single-stranded polyribonucleotides processively in the 3'- to 5'-direction. The protein is Polyribonucleotide nucleotidyltransferase of Tropheryma whipplei (strain Twist) (Whipple's bacillus).